Reading from the N-terminus, the 56-residue chain is Large ribosomal subunit protein eL37 (56 aa).

Zn(2+) contacts are provided by cysteine 19, cysteine 22, cysteine 34, and cysteine 37. The segment at 19–37 (CRRCGSVSFNVHTKQCTSC) adopts a C4-type zinc-finger fold.

It belongs to the eukaryotic ribosomal protein eL37 family. Requires Zn(2+) as cofactor.

In terms of biological role, binds to the 23S rRNA. This is Large ribosomal subunit protein eL37 (rpl37e) from Methanosarcina acetivorans (strain ATCC 35395 / DSM 2834 / JCM 12185 / C2A).